The following is a 134-amino-acid chain: UPF0412 protein YaaI (134 aa).

Residues 1–23 form the signal peptide; that stretch reads MRSVLTISVGLLFGLALSSVAHA.

Belongs to the UPF0412 family.

This chain is UPF0412 protein YaaI, found in Salmonella paratyphi A (strain ATCC 9150 / SARB42).